The chain runs to 49 residues: Small ribosomal subunit protein uS19c (49 aa).

The protein belongs to the universal ribosomal protein uS19 family.

It is found in the plastid. The protein resides in the chloroplast. In terms of biological role, protein S19 forms a complex with S13 that binds strongly to the 16S ribosomal RNA. This chain is Small ribosomal subunit protein uS19c (rps19), found in Sinapis alba (White mustard).